The following is a 218-amino-acid chain: Embryonic polyadenylate-binding protein 2-A (218 aa).

The segment covering 1–16 (MSERVSEEPGLDKGDG) has biased composition (basic and acidic residues). Disordered stretches follow at residues 1–26 (MSERVSEEPGLDKGDGAEECELDDPE) and 169–218 (RTNM…NHPY). Positions 93–170 (RSVYVGNVDY…RTIKVLPKRT (78 aa)) constitute an RRM domain. Positions 205–218 (FRGCGRPGPLNHPY) are enriched in low complexity.

It is found in the cytoplasm. Its function is as follows. Binds the poly(A) tail of mRNA. Unable to interact with the cap-binding complex and is therefore unlikely to be involved in translation initiation. The polypeptide is Embryonic polyadenylate-binding protein 2-A (Pabpn1l-a) (Xenopus laevis (African clawed frog)).